A 469-amino-acid chain; its full sequence is ATP synthase subunit beta (469 aa).

Residue 155–162 participates in ATP binding; the sequence is GGAGVGKT.

Belongs to the ATPase alpha/beta chains family. In terms of assembly, F-type ATPases have 2 components, CF(1) - the catalytic core - and CF(0) - the membrane proton channel. CF(1) has five subunits: alpha(3), beta(3), gamma(1), delta(1), epsilon(1). CF(0) has three main subunits: a(1), b(2) and c(9-12). The alpha and beta chains form an alternating ring which encloses part of the gamma chain. CF(1) is attached to CF(0) by a central stalk formed by the gamma and epsilon chains, while a peripheral stalk is formed by the delta and b chains.

Its subcellular location is the cell inner membrane. It carries out the reaction ATP + H2O + 4 H(+)(in) = ADP + phosphate + 5 H(+)(out). Its function is as follows. Produces ATP from ADP in the presence of a proton gradient across the membrane. The catalytic sites are hosted primarily by the beta subunits. This Helicobacter pylori (strain ATCC 700392 / 26695) (Campylobacter pylori) protein is ATP synthase subunit beta.